The chain runs to 904 residues: E3 SUMO-protein ligase SIZ1 (904 aa).

Over residues 1-13 (MINLEDYWEDETP) the composition is skewed to acidic residues. Residues 1–21 (MINLEDYWEDETPGPDREPTN) are disordered. Residues 34 to 68 (MELLKVSELKDICRSVSFPVSGRKAVLQDLIRNFL) form the SAP domain. The disordered stretch occupies residues 122–170 (MEGPPTVQQQSPSVIRQSPTQRRKTSTTSSTSRAPPPTNPDASSSSSSF). Over residues 127-136 (TVQQQSPSVI) the composition is skewed to polar residues. Serine 132 carries the post-translational modification Phosphoserine. Positions 137 to 154 (RQSPTQRRKTSTTSSTSR) are enriched in low complexity. The PINIT domain maps to 162-314 (DASSSSSSFA…KLFGYIVEMI (153 aa)). The SP-RING-type zinc-finger motif lies at 344-431 (EDEEMGLTTT…LQNCQKNVEQ (88 aa)). Residues cysteine 377, histidine 379, cysteine 400, and cysteine 403 each coordinate Zn(2+). 3 disordered regions span residues 443–584 (ILED…DDDR), 596–616 (STNT…TLDP), and 672–733 (SPDV…ISDS). Residues 444–454 (LEDDDDSDSDS) show a composition bias toward acidic residues. The segment covering 501-511 (NNHDDSNRHSN) has biased composition (basic and acidic residues). Residues 512–553 (DNNNNSIKNNDSHNKNNNNNNNNNNNNNDNNNSIENNDSNSN) are compositionally biased toward low complexity. Polar residues-rich tracts occupy residues 561–574 (RSNT…KNLM), 596–611 (STNT…SAPS), and 672–683 (SPDVSVSSPTPR). A compositionally biased stretch (low complexity) spans 684-699 (NTASNASSSALSTPPL). Polar residues predominate over residues 721–733 (INSNSYTASISDS). Position 794 is a phosphoserine (serine 794). The interval 794–904 (SLPTTEAITR…QDYGKKYNSG (111 aa)) is required for localization at the bud neck. A compositionally biased stretch (polar residues) spans 877–894 (RQLSNTSSTSPIMGTWKT). Positions 877–904 (RQLSNTSSTSPIMGTWKTQDYGKKYNSG) are disordered.

The protein belongs to the PIAS family. In terms of assembly, interacts with UBC9 and CDC3. Phosphorylated in early M-phase. In terms of processing, autosumoylated upon ethanol stress.

The protein resides in the cytoplasm. It is found in the nucleus. Its subcellular location is the bud neck. Its pathway is protein modification; protein sumoylation. Acts as an E3 ligase mediating SUMO/Smt3 attachment to septins and PCNA. May be involved in chromosome maintenance. This Saccharomyces cerevisiae (strain ATCC 204508 / S288c) (Baker's yeast) protein is E3 SUMO-protein ligase SIZ1 (SIZ1).